The chain runs to 160 residues: SsrA-binding protein (160 aa).

It belongs to the SmpB family.

The protein localises to the cytoplasm. In terms of biological role, required for rescue of stalled ribosomes mediated by trans-translation. Binds to transfer-messenger RNA (tmRNA), required for stable association of tmRNA with ribosomes. tmRNA and SmpB together mimic tRNA shape, replacing the anticodon stem-loop with SmpB. tmRNA is encoded by the ssrA gene; the 2 termini fold to resemble tRNA(Ala) and it encodes a 'tag peptide', a short internal open reading frame. During trans-translation Ala-aminoacylated tmRNA acts like a tRNA, entering the A-site of stalled ribosomes, displacing the stalled mRNA. The ribosome then switches to translate the ORF on the tmRNA; the nascent peptide is terminated with the 'tag peptide' encoded by the tmRNA and targeted for degradation. The ribosome is freed to recommence translation, which seems to be the essential function of trans-translation. The protein is SsrA-binding protein of Pectobacterium atrosepticum (strain SCRI 1043 / ATCC BAA-672) (Erwinia carotovora subsp. atroseptica).